Consider the following 414-residue polypeptide: Glutamyl-tRNA reductase (414 aa).

Substrate is bound by residues 49 to 52, Ser108, 113 to 115, and Gln119; these read TCNR and EPQ. Cys50 (nucleophile) is an active-site residue. 188–193 provides a ligand contact to NADP(+); sequence GAGQTG.

The protein belongs to the glutamyl-tRNA reductase family. As to quaternary structure, homodimer.

The catalysed reaction is (S)-4-amino-5-oxopentanoate + tRNA(Glu) + NADP(+) = L-glutamyl-tRNA(Glu) + NADPH + H(+). The protein operates within porphyrin-containing compound metabolism; protoporphyrin-IX biosynthesis; 5-aminolevulinate from L-glutamyl-tRNA(Glu): step 1/2. Functionally, catalyzes the NADPH-dependent reduction of glutamyl-tRNA(Glu) to glutamate 1-semialdehyde (GSA). The sequence is that of Glutamyl-tRNA reductase from Francisella tularensis subsp. holarctica (strain FTNF002-00 / FTA).